Consider the following 267-residue polypeptide: MNRIEQQFKKSPAYVAYLTAGDGGLERSLESLLALAKGGVNILEVGVPFSDPVADGPVIQEASIRALAQGTTLHDVLTLITSFRQHSEIPIILFTYFNPLLAAGDKIYQQMKSAGVDGCLVVDLPVEEAAPHLTACKTAKIAPILLISPSTTQERLKKINEHGEGMLYYVCRPGTTGVRATLPENFPAKMNQIKSMTSLPIVTGFGIANRKMAAQALQYADGFVIGSLFVKAIAEGISKNALTRLAQSLNPHYPNLRLITPFRKKTF.

Active-site proton acceptor residues include Glu-44 and Asp-55.

This sequence belongs to the TrpA family. In terms of assembly, tetramer of two alpha and two beta chains.

The catalysed reaction is (1S,2R)-1-C-(indol-3-yl)glycerol 3-phosphate + L-serine = D-glyceraldehyde 3-phosphate + L-tryptophan + H2O. The protein operates within amino-acid biosynthesis; L-tryptophan biosynthesis; L-tryptophan from chorismate: step 5/5. The alpha subunit is responsible for the aldol cleavage of indoleglycerol phosphate to indole and glyceraldehyde 3-phosphate. This chain is Tryptophan synthase alpha chain, found in Coxiella burnetii (strain Dugway 5J108-111).